Reading from the N-terminus, the 248-residue chain is Ribosomal RNA small subunit methyltransferase J (248 aa).

Residues 101–102, 117–118, 153–154, and Asp-171 contribute to the S-adenosyl-L-methionine site; these read RD, ER, and SS.

It belongs to the methyltransferase superfamily. RsmJ family.

Its subcellular location is the cytoplasm. It catalyses the reaction guanosine(1516) in 16S rRNA + S-adenosyl-L-methionine = N(2)-methylguanosine(1516) in 16S rRNA + S-adenosyl-L-homocysteine + H(+). In terms of biological role, specifically methylates the guanosine in position 1516 of 16S rRNA. This chain is Ribosomal RNA small subunit methyltransferase J, found in Proteus mirabilis (strain HI4320).